The sequence spans 1856 residues: Protein TANC1 (1856 aa).

N-acetylmethionine is present on M1. 5 disordered regions span residues 1 to 45 (MLKA…LSTT), 58 to 130 (SMSL…SCSP), 203 to 222 (KSPC…KDSG), 262 to 296 (RADN…PVPY), and 437 to 489 (IASS…RPRE). Over residues 8-21 (KSREGGKGSKKEAG) the composition is skewed to basic and acidic residues. The span at 29–45 (PALSSSGDSPVNSLSTT) shows a compositional bias: polar residues. Phosphoserine is present on residues S60, S63, S64, S204, S267, and S462. The segment covering 60–77 (SLPSSPLLPRQSLLTQSR) has biased composition (low complexity). Residues 203–216 (KSPCETISSPSSTL) show a composition bias toward polar residues. Over residues 439–475 (SSSPSLSPKSSDPTQDLPGTPLLSPSSSTSALSVTRT) the composition is skewed to low complexity. ANK repeat units follow at residues 893-925 (EGLS…NVNY), 931-960 (NNAP…CLDG), 964-993 (NGMN…RVDH), 997-1026 (KGQC…SAGP), 1037-1066 (ALQQ…EHEI), 1075-1104 (WGET…AVSR), 1108-1137 (RGVP…DVNL), 1141-1170 (QGRT…ALSS), 1174-1203 (EGLS…EIDQ), 1207-1236 (NGRT…VIEH), and 1240-1269 (SGMR…KLGN). 3 TPR repeats span residues 1286 to 1319 (LQKL…FPRE), 1333 to 1366 (VSLY…KPKS), and 1368 to 1400 (EAFY…CPNN). The span at 1417–1426 (LQRNQQQKQQ) shows a compositional bias: low complexity. Disordered stretches follow at residues 1417–1597 (LQRN…FGDR), 1636–1720 (DMAP…NTPF), and 1832–1856 (HVST…ESNV). S1436 and S1463 each carry phosphoserine. Residues 1454–1463 (EEAEEEDTSS) are compositionally biased toward acidic residues. 2 stretches are compositionally biased toward polar residues: residues 1490–1505 (EGLQ…QSRA) and 1524–1556 (PTKQ…VSSQ). Residues 1656–1686 (SLSSSGSSGSPSSSIKMSSSTSSLTSSSSVS) are compositionally biased toward low complexity. 3 positions are modified to phosphoserine: S1665, S1673, and S1674.

Belongs to the TANC family. In terms of assembly, interacts probably directly with DLG1, DLG4, HOMER1. Interacts with DLGAP1, INA, CAMK2A, GRIN2B and GRIA1. Interacts with TNIK and MINK1. Post-translationally, phosphorylated; by MINK1 and TNIK upon stimulation by RAP2A.

Its subcellular location is the postsynaptic density. Its function is as follows. May be a scaffold component in the postsynaptic density. This is Protein TANC1 (Tanc1) from Mus musculus (Mouse).